The sequence spans 329 residues: GTPase Obg (329 aa).

The 159-residue stretch at 1–159 folds into the Obg domain; that stretch reads MQFIDQARIS…WPLQLELKLL (159 aa). One can recognise an OBG-type G domain in the interval 160–328; that stretch reads AEVGIIGLPN…MLDRVWSELG (169 aa). Residues 166 to 173, 191 to 195, 213 to 216, 280 to 283, and 309 to 311 each bind ATP; these read GLPNAGKS, FTTLI, DIPG, NKQE, and SAA. S173 and T193 together coordinate Mg(2+).

This sequence belongs to the TRAFAC class OBG-HflX-like GTPase superfamily. OBG GTPase family. As to quaternary structure, monomer. It depends on Mg(2+) as a cofactor.

The protein localises to the cytoplasm. An essential GTPase which binds GTP, GDP and possibly (p)ppGpp with moderate affinity, with high nucleotide exchange rates and a fairly low GTP hydrolysis rate. Plays a role in control of the cell cycle, stress response, ribosome biogenesis and in those bacteria that undergo differentiation, in morphogenesis control. This is GTPase Obg from Synechococcus sp. (strain CC9311).